The following is a 74-amino-acid chain: Protein kish-B (74 aa).

Residues 1-22 (MTNVYSLDGILVFGLLFVCTCA) form the signal peptide. Over 23–52 (YFKKVPRLKTWLLSEKKGVWGVFYKAAVIG) the chain is Extracellular. Residues 53–73 (TRLHAAVAIACIVMAFYVLFI) traverse the membrane as a helical segment. Lys-74 is a topological domain (cytoplasmic).

Belongs to the KISH family.

The protein resides in the golgi apparatus membrane. Involved in the early part of the secretory pathway. This chain is Protein kish-B (TMEM167B), found in Bos taurus (Bovine).